The chain runs to 839 residues: DNA-directed RNA polymerase YonO (839 aa).

Positions 535, 537, and 539 each coordinate Mg(2+).

Belongs to the YRH RNA polymerase family. Requires a divalent metal cation as cofactor.

The catalysed reaction is RNA(n) + a ribonucleoside 5'-triphosphate = RNA(n+1) + diphosphate. Its function is as follows. A single subunit DNA-dependent RNA polymerase (RNAP) that catalyzes the transcription of DNA into RNA using the four ribonucleoside triphosphates (rNTPs) as substrates. The enzyme is more highly processive than the multisubunit RNAP from E.coli but is considerably more error-prone. It has no detectable proof-reading function but can perform pyrophosphorolysis. Probably transcribes the late genes of the SPbeta phage starting from yonK. The sequence is that of DNA-directed RNA polymerase YonO (yonO) from Bacillus pumilus (Bacillus mesentericus).